A 210-amino-acid chain; its full sequence is dITP/XTP pyrophosphatase (210 aa).

19–24 (SNNPGK) contacts substrate. Residues Asp-51 and Asp-80 each contribute to the Mg(2+) site. Asp-80 (proton acceptor) is an active-site residue. Substrate contacts are provided by residues Ser-81, 166-169 (FGYD), Lys-189, and 194-195 (HR).

This sequence belongs to the HAM1 NTPase family. In terms of assembly, homodimer. Requires Mg(2+) as cofactor.

It catalyses the reaction XTP + H2O = XMP + diphosphate + H(+). It carries out the reaction dITP + H2O = dIMP + diphosphate + H(+). The enzyme catalyses ITP + H2O = IMP + diphosphate + H(+). Functionally, pyrophosphatase that catalyzes the hydrolysis of nucleoside triphosphates to their monophosphate derivatives, with a high preference for the non-canonical purine nucleotides XTP (xanthosine triphosphate), dITP (deoxyinosine triphosphate) and ITP. Seems to function as a house-cleaning enzyme that removes non-canonical purine nucleotides from the nucleotide pool, thus preventing their incorporation into DNA/RNA and avoiding chromosomal lesions. This chain is dITP/XTP pyrophosphatase, found in Burkholderia mallei (strain ATCC 23344).